The primary structure comprises 187 residues: MTEYKLVVVGAVGVGKSALTIQLIQNHFVDEYDPTIEDSYRKQVVIDGETCLLDILDTAGQEEYSAMRDQYMRTGEGFLCVFAINNIKSFEDIHHYREQIKRVKDSEDVPMVLVGNKCALPSRTVDTKQAQDLARSYGIPFIETSAKTRQGVDDAFYTLVREIRKHKEKMSKDGKKKKKSKTKCSIL.

GTP-binding positions include 10 to 18, 29 to 35, 59 to 60, and 116 to 119; these read GAVGVGKSA, VDEYDPT, AG, and NKCA. Residues 32 to 40 carry the Effector region motif; the sequence is YDPTIEDSY. Residues 168 to 187 form a disordered region; sequence EKMSKDGKKKKKSKTKCSIL. Cysteine methyl ester is present on cysteine 184. Residue cysteine 184 is the site of S-farnesyl cysteine attachment. Positions 185–187 are cleaved as a propeptide — removed in mature form; it reads SIL.

This sequence belongs to the small GTPase superfamily. Ras family.

It is found in the cell membrane. The protein resides in the cytoplasm. It catalyses the reaction GTP + H2O = GDP + phosphate + H(+). Alternates between an inactive form bound to GDP and an active form bound to GTP. Activated by a guanine nucleotide-exchange factor (GEF) and inactivated by a GTPase-activating protein (GAP). Functionally, ras proteins bind GDP/GTP and possess intrinsic GTPase activity. Plays an important role in the regulation of cell proliferation. The polypeptide is GTPase KRas (kras) (Xenopus laevis (African clawed frog)).